We begin with the raw amino-acid sequence, 920 residues long: Phosphoenolpyruvate carboxylase (920 aa).

Residues H138 and K583 contribute to the active site.

The protein belongs to the PEPCase type 1 family. Requires Mg(2+) as cofactor.

It catalyses the reaction oxaloacetate + phosphate = phosphoenolpyruvate + hydrogencarbonate. Functionally, forms oxaloacetate, a four-carbon dicarboxylic acid source for the tricarboxylic acid cycle. This is Phosphoenolpyruvate carboxylase from Streptococcus pyogenes serotype M3 (strain ATCC BAA-595 / MGAS315).